The following is a 496-amino-acid chain: MKYVLSLDQGTTSSRAIVFDEKGNVVSKVNKEFRQIYPRPGWVEHDPVEIWESQIEVAKKAIEEAGIKPEDIAAIGITNQRETTIVWDKNTGKPVYNAIVWQCRRTAPICDELKEKGYSEFIRERTGLVIDAYFSGTKIKWILDNVEGVREKAEKGEVLFGTVDTWLIWNLTGGRVHVTDYSNASRTMIFNIHKLDWDDEILELLNIPRAMLPQVMPSSHVYGYTAKDIFGVEIPIAGDAGDQQAALFGQACFQPGMLKNTYGTGCFLLMNTGEKAFESKSGLLTTIAWGINGKVYYALEGSIFITGAAVQWLRDGLKIISNAAETEELATKVPDNGGVFFVPAFVGLGAPYWDMYARGLIIGITRGTTREHIVRAVLESIAYQTRDVVEVMEKDSDIKVETLRVDGGAVVNNFLMQFQADILGVPVERPVVNETTALGAAYLAGLAVGYWKDQEEIASLWQLDRRFEPSMNSEERERLYSKWKEAVSRSLGWEKR.

Thr11 is an ADP binding site. The ATP site is built by Thr11, Thr12, and Ser13. Thr11 is a binding site for sn-glycerol 3-phosphate. Arg15 contacts ADP. Sn-glycerol 3-phosphate-binding residues include Arg81, Glu82, Tyr133, and Asp242. The glycerol site is built by Arg81, Glu82, Tyr133, Asp242, and Gln243. Residues Thr264 and Gly307 each contribute to the ADP site. ATP-binding residues include Thr264, Gly307, Gln311, and Gly408. 2 residues coordinate ADP: Gly408 and Asn412.

Belongs to the FGGY kinase family.

It catalyses the reaction glycerol + ATP = sn-glycerol 3-phosphate + ADP + H(+). The protein operates within polyol metabolism; glycerol degradation via glycerol kinase pathway; sn-glycerol 3-phosphate from glycerol: step 1/1. Inhibited by fructose 1,6-bisphosphate (FBP). Its function is as follows. Key enzyme in the regulation of glycerol uptake and metabolism. Catalyzes the phosphorylation of glycerol to yield sn-glycerol 3-phosphate. The chain is Glycerol kinase 2 from Thermotoga maritima (strain ATCC 43589 / DSM 3109 / JCM 10099 / NBRC 100826 / MSB8).